The following is a 431-amino-acid chain: Protoheme IX farnesyltransferase, mitochondrial (431 aa).

Residues 1–33 (MWRRSVVYRFSSRISVSSSLPNPRLIPWSRELC) constitute a mitochondrion transit peptide. Helical transmembrane passes span 109 to 129 (LVVATSGTGYILGTGNAAISF), 131 to 153 (GLCYTCAGTMMIAASANSLNQIF), 174 to 194 (ISVPHAVAWATIAGASGACLL), 200 to 220 (MLAAGLASANLVLYAFVYTPL), 226 to 246 (INTWVGAVVGAIPPLLGWAAA), 255 to 275 (MILPAALYFWQIPHFMALAHL), 298 to 317 (IAAVALRNCFYMIPLGFIAY), 322 to 344 (TSSWFCLESTLLTLAIAATAFSF), and 356 to 376 (MFHASLLFLPVFMSGLLLHRV).

Belongs to the ubiA prenyltransferase (TC 3.D.4.8) family.

It is found in the mitochondrion inner membrane. It carries out the reaction heme b + (2E,6E)-farnesyl diphosphate + H2O = Fe(II)-heme o + diphosphate. Functionally, converts protoheme IX and farnesyl diphosphate to heme O. This chain is Protoheme IX farnesyltransferase, mitochondrial (COX10), found in Arabidopsis thaliana (Mouse-ear cress).